Reading from the N-terminus, the 273-residue chain is Bis(5'-nucleosyl)-tetraphosphatase, symmetrical (273 aa).

It belongs to the Ap4A hydrolase family.

It carries out the reaction P(1),P(4)-bis(5'-adenosyl) tetraphosphate + H2O = 2 ADP + 2 H(+). Its function is as follows. Hydrolyzes diadenosine 5',5'''-P1,P4-tetraphosphate to yield ADP. This Proteus mirabilis (strain HI4320) protein is Bis(5'-nucleosyl)-tetraphosphatase, symmetrical.